We begin with the raw amino-acid sequence, 388 residues long: L-arabinitol 4-dehydrogenase (388 aa).

8 residues coordinate Zn(2+): Cys55, His80, Glu81, Cys110, Cys113, Cys116, Cys124, and Glu165. Residues 192 to 193, Asp213, Arg218, Ile293, and 317 to 319 each bind NAD(+); these read PI and QYR.

Belongs to the zinc-containing alcohol dehydrogenase family. Homotetramer. Zn(2+) serves as cofactor.

The catalysed reaction is L-arabinitol + NAD(+) = L-xylulose + NADH + H(+). It functions in the pathway carbohydrate degradation; L-arabinose degradation via L-arabinitol; D-xylulose 5-phosphate from L-arabinose (fungal route): step 2/5. Functionally, catalyzes the NAD-dependent oxidation of L-arabinitol to L-xylulose in the fungal L-arabinose catabolic pathway. L-arabinose catabolism is important for using plant material as a carbon source. NADP cannot act as a cosubstrate. The sequence is that of L-arabinitol 4-dehydrogenase (lad) from Talaromyces emersonii (Thermophilic fungus).